Here is a 177-residue protein sequence, read N- to C-terminus: Interleukin-7 (177 aa).

Positions 1–25 (MFHVSFRYIFGLPPLILVLLPVASS) are cleaved as a signal peptide. Disulfide bonds link Cys27–Cys166, Cys59–Cys154, and Cys72–Cys117. N-linked (GlcNAc...) asparagine glycans are attached at residues Asn95, Asn116, and Asn141.

Belongs to the IL-7/IL-9 family. As to quaternary structure, interacts with IL7R and CSF2RG.

The protein localises to the secreted. Hematopoietic cytokine that plays an essential role in the development, expansion, and survival of naive and memory T-cells and B-cells thereby regulating the number of mature lymphocytes and maintaining lymphoid homeostasis. Mechanistically, exerts its biological effects through a receptor composed of IL7RA subunit and the cytokine receptor common subunit gamma/CSF2RG. Binding to the receptor leads to activation of various kinases including JAK1 or JAK3 depending on the cell type and subsequently propagation of signals through activation of several downstream signaling pathways including the PI3K/Akt/mTOR or the JAK-STAT5. In Homo sapiens (Human), this protein is Interleukin-7 (IL7).